We begin with the raw amino-acid sequence, 1296 residues long: Nuclear factor related to kappa-B-binding protein (1296 aa).

Positions 39 to 156 (PEDLLEDPEI…LKQILASRSD (118 aa)) constitute a DEUBAD domain. Disordered regions lie at residues 165 to 186 (GPAL…EREW) and 204 to 232 (GDTA…PAVP). A compositionally biased stretch (low complexity) spans 216-232 (SSWLPSSPARSPSPAVP). Phosphoserine occurs at positions 228 and 298. A Glycyl lysine isopeptide (Lys-Gly) (interchain with G-Cter in SUMO2) cross-link involves residue Lys327. A Phosphoserine modification is found at Ser351. Residues 370–495 (LGINEISSSF…FCKENEDSSD (126 aa)) form a winged-helix like domain region. Residue Lys469 forms a Glycyl lysine isopeptide (Lys-Gly) (interchain with G-Cter in SUMO2) linkage. Lys488 participates in a covalent cross-link: Glycyl lysine isopeptide (Lys-Gly) (interchain with G-Cter in SUMO1); alternate. Lys488 participates in a covalent cross-link: Glycyl lysine isopeptide (Lys-Gly) (interchain with G-Cter in SUMO2); alternate. 2 disordered regions span residues 663 to 758 (QAQA…SSGV) and 1015 to 1036 (HAAD…PAGT). Residues 700 to 713 (PSEQSQMSLSDSSM) show a composition bias toward low complexity. Over residues 726–737 (PALPTPISPPPV) the composition is skewed to pro residues. Residues 741-758 (NRSGSSTVSEPAQSSSGV) are compositionally biased toward polar residues. A compositionally biased stretch (low complexity) spans 1016–1034 (AADSPAKAPSASVPSSAPA). A Phosphoserine modification is found at Ser1019. Lys1234 is modified (N6-acetyllysine). The residue at position 1288 (Ser1288) is a Phosphoserine.

Belongs to the NFRKB family. Component of the chromatin remodeling INO80 complex; specifically part of a complex module associated with the N-terminus of INO80. Interacts with UCHL5.

Its subcellular location is the nucleus. Its function is as follows. Binds to the DNA consensus sequence 5'-GGGGAATCTCC-3'. In terms of biological role, putative regulatory component of the chromatin remodeling INO80 complex which is involved in transcriptional regulation, DNA replication and probably DNA repair. Modulates the deubiquitinase activity of UCHL5 in the INO80 complex. The protein is Nuclear factor related to kappa-B-binding protein (Nfrkb) of Mus musculus (Mouse).